The primary structure comprises 282 residues: Deoxyribonuclease-1 (282 aa).

The signal sequence occupies residues 1–20 (MARLVLELLAAALLLRVAAT). N-linked (GlcNAc...) asparagine glycosylation is present at N38. The active site involves E98. C121 and C124 are disulfide-bonded. The active site involves H154. Residues C193 and C229 are joined by a disulfide bond.

This sequence belongs to the DNase I family. The cofactor is Ca(2+). Mg(2+) is required as a cofactor. N-glycosylated.

The protein localises to the secreted. Its subcellular location is the zymogen granule. The protein resides in the nucleus envelope. It catalyses the reaction Endonucleolytic cleavage to 5'-phosphodinucleotide and 5'-phosphooligonucleotide end-products.. Its function is as follows. Serum endocuclease secreted into body fluids by a wide variety of exocrine and endocrine organs. Expressed by non-hematopoietic tissues and preferentially cleaves protein-free DNA. Among other functions, seems to be involved in cell death by apoptosis. Binds specifically to G-actin and blocks actin polymerization. The protein is Deoxyribonuclease-1 (DNASE1) of Gallus gallus (Chicken).